We begin with the raw amino-acid sequence, 388 residues long: Na(+)/H(+) antiporter NhaA (388 aa).

Topologically, residues 1–11 (MKHLHRFFSSD) are cytoplasmic. A helical membrane pass occupies residues 12 to 31 (ASGGIILIIAAILAMMMANS). Over 32–58 (GATSGWYHDFLETPVQLRVGSLEINKN) the chain is Periplasmic. A helical membrane pass occupies residues 59-80 (MLLWINDALMAVFFLLVGLEVK). Residues 81 to 96 (RELMQGSLASLRQAAF) are Cytoplasmic-facing. A helical transmembrane segment spans residues 97-116 (PVIAAIGGMIVPALLYLAFN). Topologically, residues 117–122 (YADPIT) are periplasmic. Residues 123 to 130 (REGWAIPA) form a helical membrane-spanning segment. Topologically, residues 131-154 (ATDIAFALGVLALLGSRVPLALKI) are cytoplasmic. Residues 155–176 (FLMALAIIDDLGAIIIIALFYT) traverse the membrane as a helical segment. The Periplasmic segment spans residues 177 to 180 (NDLS). Residues 181–200 (MASLGVAAVAIAVLAVLNLC) form a helical membrane-spanning segment. The Cytoplasmic portion of the chain corresponds to 201-204 (GVRR). Residues 205–222 (TGVYILVGVVLWTAVLKS) traverse the membrane as a helical segment. Position 223 (G223) is a topological domain, periplasmic. Residues 224–236 (VHATLAGVIVGFF) form a helical membrane-spanning segment. The Cytoplasmic segment spans residues 237–253 (IPLKEKHGRSTAKRLEH). The chain crosses the membrane as a helical span at residues 254-272 (VLHPWVAYLILPLFAFANA). Over 273 to 286 (GVSLQGVTLDGLTS) the chain is Periplasmic. A helical transmembrane segment spans residues 287–310 (ILPLGIIAGLLIGKPLGISLFCWL). Topologically, residues 311–339 (ALRLKLAHLPEGTTYQQIMAVGILCGIGF) are cytoplasmic. The helical transmembrane segment at 340 to 350 (TMSIFIASLAF) threads the bilayer. At 351–357 (GSVDPEL) the chain is on the periplasmic side. A helical membrane pass occupies residues 358–380 (INWAKLGILVGSISSAVIGYSWL). Over 381–388 (RVRLRPSV) the chain is Cytoplasmic.

It belongs to the NhaA Na(+)/H(+) (TC 2.A.33) antiporter family.

The protein resides in the cell inner membrane. The enzyme catalyses Na(+)(in) + 2 H(+)(out) = Na(+)(out) + 2 H(+)(in). Na(+)/H(+) antiporter that extrudes sodium in exchange for external protons. The sequence is that of Na(+)/H(+) antiporter NhaA from Shigella dysenteriae serotype 1 (strain Sd197).